Consider the following 310-residue polypeptide: Thioredoxin reductase (310 aa).

N34–Q41 contacts FAD. A disulfide bridge links C135 with C138. D281 to A290 serves as a coordination point for FAD.

It belongs to the class-II pyridine nucleotide-disulfide oxidoreductase family. As to quaternary structure, homodimer. Requires FAD as cofactor.

The protein resides in the cytoplasm. It carries out the reaction [thioredoxin]-dithiol + NADP(+) = [thioredoxin]-disulfide + NADPH + H(+). The sequence is that of Thioredoxin reductase (trxB) from Rickettsia bellii (strain RML369-C).